Here is a 488-residue protein sequence, read N- to C-terminus: TOX high mobility group box family member 2 (488 aa).

The segment at Y76–L114 is required for transcriptional activation. Disordered stretches follow at residues R192–P258, W293–M328, and S363–I473. The segment covering G204–T216 has biased composition (low complexity). Basic and acidic residues predominate over residues E222 to K239. The short motif at V223–P252 is the Nuclear localization signal element. Basic residues predominate over residues K240–K250. A DNA-binding region (HMG box) is located at residues P255–P323. Polar residues predominate over residues Q302–N316. Over residues P443–G460 the composition is skewed to low complexity.

It is found in the nucleus. In terms of biological role, putative transcriptional activator involved in the hypothalamo-pituitary-gonadal system. The protein is TOX high mobility group box family member 2 (TOX2) of Homo sapiens (Human).